Here is a 445-residue protein sequence, read N- to C-terminus: Membrane protein insertase YidC (445 aa).

A run of 5 helical transmembrane segments spans residues 6 to 26, 248 to 268, 313 to 333, 352 to 372, and 388 to 408; these read VVAILLAILPIFLFAVEPIKV, FGWAIMLFTLIVRLILYPLYH, ASGCLMLLIQLPIFMLLWSVI, LSAGGFSNNWLFLVITIVASY, and GIIMSVIFPFLFVGLPSGLFL.

It belongs to the OXA1/ALB3/YidC family. Type 1 subfamily. As to quaternary structure, interacts with the Sec translocase complex via SecD. Specifically interacts with transmembrane segments of nascent integral membrane proteins during membrane integration.

It localises to the cell inner membrane. Required for the insertion and/or proper folding and/or complex formation of integral membrane proteins into the membrane. Involved in integration of membrane proteins that insert both dependently and independently of the Sec translocase complex, as well as at least some lipoproteins. Aids folding of multispanning membrane proteins. The protein is Membrane protein insertase YidC of Thermotoga maritima (strain ATCC 43589 / DSM 3109 / JCM 10099 / NBRC 100826 / MSB8).